Consider the following 248-residue polypeptide: MREDNPNWFLRWEEELPSPEELIPISQTLITPHLALAFQIGSPNHHLGSKRTTAIYHQKLQSSTTPTTPTPTPPPMMMNSDFGGGDSTDLGSGSIGGEPARTLKRPRLVWTPQLHKRFVDAVGHLGIKNAVPKTIMQLMSVEGLTRENVASHLQKYRLYLRRMQGGNGNGITGGHVIVSDSATDRLFASSPVPAHFLSPDYLMPPLEHSYMGKHVITQQNQVVRNLRYEDSEYGHGSMKMLKLFPAGN.

Positions Thr102–Arg161 form a DNA-binding region, myb-like GARP.

In terms of tissue distribution, expressed in roots, leaves, stems, petioles, filaments, stigma, pedicels, sepals, anthers, petals, and siliques.

It localises to the nucleus. Its function is as follows. Probable transcription factor that acts as a negative regulator of freezing tolerance via a CBF-independent pathway. The protein is Transcription factor MYBC1 of Arabidopsis thaliana (Mouse-ear cress).